A 67-amino-acid polypeptide reads, in one-letter code: Protein C' (67 aa).

Belongs to the rhabdoviruses C protein family.

Its function is as follows. Seems to stimulates transcription by the viral polymerase. May play a role in viral pathogenesis or transmission by insects vectors. This chain is Protein C' (P), found in Vesicular stomatitis Indiana virus (strain 85CLB South America) (VSIV).